Here is a 462-residue protein sequence, read N- to C-terminus: Protein ultraspiracle homolog (462 aa).

The interval 1-113 (MSSVAKKDKR…NHPLSGSKHL (113 aa)) is modulating. 2 consecutive NR C4-type zinc fingers follow at residues 114–134 (CSIC…CEGC) and 150–174 (CRED…YQKC). A DNA-binding region (nuclear receptor) is located at residues 114–179 (CSICGDRASG…RYQKCLACGM (66 aa)). Residues 180-201 (KREAVQEERQRAARRTEDAHPS) are hinge. In terms of domain architecture, NR LBD spans 204–453 (VQELSIERLL…SYIRDALCNH (250 aa)).

The protein belongs to the nuclear hormone receptor family. NR2 subfamily. In terms of assembly, heterodimer of USP and ECR. Abundant expression seen in males and ovaries.

Its subcellular location is the nucleus. This Bombyx mori (Silk moth) protein is Protein ultraspiracle homolog (USP).